Here is a 194-residue protein sequence, read N- to C-terminus: A-type ATP synthase subunit E (194 aa).

Belongs to the V-ATPase E subunit family. In terms of assembly, has multiple subunits with at least A(3), B(3), C, D, E, F, H, I and proteolipid K(x).

The protein localises to the cell membrane. Functionally, component of the A-type ATP synthase that produces ATP from ADP in the presence of a proton gradient across the membrane. The chain is A-type ATP synthase subunit E from Saccharolobus solfataricus (strain ATCC 35092 / DSM 1617 / JCM 11322 / P2) (Sulfolobus solfataricus).